A 472-amino-acid polypeptide reads, in one-letter code: MNAVTDKSVADYIVADMALAGWGRRELAIAETEMPGLMAIRDEYAASQPLKGARIAGSLHMTIQTGVLIETLVALGAEVRWASCNIFSTQDHAAAAIAATGTPVFAIKGETLEEYWQYTHKIFEWPEGRHANMILDDGGDATLLLHLGARAEQDISVLAKPGSEEERVLFAAIKETLGRDPKWYSTRLAQIKGVTEETTTGVHRLYQMSQKGELAFAAINVNDSVTKSKFDNLYGCRESLVDGIKRATDVMVAGKIAVVAGYGDVGKGCAQALVALRAQVWVTEIDPICALQAAMEGFKVVTMEEAAAHADIFVTATGNYHVITRQHMEAMKDQAIVCNIGHFDNEIDVAGLENCQWEEIKPQVDHVIFPDGKRIILLAKGRLVNLGCATGHPSFVMSSSFANQTIAQIELFTRNEAYTTGQVYVLPKHLDEKVARLHLKKLGVKLSTLSKQQADYIGVPVEGPFKPDHYRY.

Substrate contacts are provided by T62, D137, and E197. Position 198–200 (T198–T200) interacts with NAD(+). Substrate contacts are provided by K227 and D231. Residues N232, G261–G266, E284, N319, I340–H342, and N385 each bind NAD(+).

Belongs to the adenosylhomocysteinase family. Requires NAD(+) as cofactor.

The protein resides in the cytoplasm. It catalyses the reaction S-adenosyl-L-homocysteine + H2O = L-homocysteine + adenosine. The protein operates within amino-acid biosynthesis; L-homocysteine biosynthesis; L-homocysteine from S-adenosyl-L-homocysteine: step 1/1. In terms of biological role, may play a key role in the regulation of the intracellular concentration of adenosylhomocysteine. The protein is Adenosylhomocysteinase of Bordetella pertussis (strain Tohama I / ATCC BAA-589 / NCTC 13251).